The chain runs to 425 residues: Histidine--tRNA ligase (425 aa).

It belongs to the class-II aminoacyl-tRNA synthetase family. As to quaternary structure, homodimer.

Its subcellular location is the cytoplasm. It catalyses the reaction tRNA(His) + L-histidine + ATP = L-histidyl-tRNA(His) + AMP + diphosphate + H(+). The polypeptide is Histidine--tRNA ligase (Histophilus somni (strain 2336) (Haemophilus somnus)).